Here is a 486-residue protein sequence, read N- to C-terminus: Kynurenine 3-monooxygenase (486 aa).

2 helical membrane passes run 401–424 and 437–459; these read LLFW…HMRY and ILTR…LCYR.

This sequence belongs to the aromatic-ring hydroxylase family. KMO subfamily. It depends on FAD as a cofactor.

Its subcellular location is the mitochondrion. It is found in the membrane. It carries out the reaction L-kynurenine + NADPH + O2 + H(+) = 3-hydroxy-L-kynurenine + NADP(+) + H2O. Its pathway is cofactor biosynthesis; NAD(+) biosynthesis; quinolinate from L-kynurenine: step 1/3. Catalyzes the hydroxylation of L-kynurenine (L-Kyn) to form 3-hydroxy-L-kynurenine (L-3OHKyn). Required for synthesis of quinolinic acid. The polypeptide is Kynurenine 3-monooxygenase (kh) (Anopheles gambiae (African malaria mosquito)).